The following is a 22-amino-acid chain: Cytin chain B (22 aa).

It belongs to the protease inhibitor I13 (potato type I serine protease inhibitor) family. As to quaternary structure, heterodimer of an A chain and a B chain, linked by a disulfide bond.

In terms of biological role, inhibitor of chymotrypsin. The polypeptide is Cytin chain B (Theromyzon tessulatum (Duck leech)).